We begin with the raw amino-acid sequence, 198 residues long: Calcium channel flower (198 aa).

Transmembrane regions (helical) follow at residues 36 to 56 (LGIV…LSII), 67 to 89 (IIQM…VCIE), and 114 to 134 (AVPP…GLIF).

This sequence belongs to the calcium channel flower family. In terms of assembly, homomultimer. Associates with the dally/ magu complex.

Its subcellular location is the cell membrane. It is found in the cytoplasmic vesicle. The protein resides in the secretory vesicle. It localises to the synaptic vesicle membrane. The protein localises to the presynaptic cell membrane. Its subcellular location is the endosome. Channel activity is inhibited by La(3+), which reduces Ca(2+) influx and thus inhibits it's function in promoting activity-dependent bulk endocytosis (ADBE) in response to high stimuli. Functionally, transmembrane protein which mediates synaptic endocytosis, fitness-based cell culling, neuronal culling, morphogen gradient scaling, and calcium transport. Regulates synaptic endocytosis and hence couples exo- with endocytosis. Controls two major modes of synaptic vesicle (SV) endocytosis in the synaptic boutons of neuromuscular junctions (NMJs); Ca(2+) channel-independent Clathrin-mediated endocytosis (CME) in response to mild stimulation, and Ca(2+) channel-dependent activity-dependent bulk endocytosis (ADBE) in response to strong stimulation. Functions in ADBE and subsequent SV reformation from bulk endosomes by initiating Ca(2+) channel-dependent phosphatidylinositol 4,5-bisphosphate (PtdIns(4,5)P2) compartmentalization in synaptic boutons. There it acts at the periactive zone to provide the low Ca(2+) levels required to initiate Calcineurin activation and upregulate PtdIns(4,5)P2. Conversely PtdIns(4,5)P2 enhances fwe Ca(2+) channel-activity, establishing a positive feedback loop that induces PtdIns(4,5)P2 microdomain at the periactive zone. These microdomains trigger bulk membrane invagination (i.e. ADBE) by triggering actin polymerization while also promoting localization of fwe to bulk endosomes, thereby removing the ADBE trigger to reduce endocytosis and prevent excess membrane uptake. PtdIns(4,5)P2 then promotes SV reformation from the bulk endosomes, to coordinate ADBE and subsequent SV reformation. Different combinations of the flower isoforms at the cell membrane are also required for the identification and elimination of suboptimal or supernumerary cells during development, regeneration, and adulthood. Required for the recognition and elimination of unfit cells in the developing wing during cell competition. In the developing pupal retina, mediates the elimination of unwanted postmitotic neurons, including supernumerary photoreceptor neurons that form at the periphery of the retina and are contained within incomplete ommatidia units. Also required for efficient elimination and replacement of old neurons by newly generated neurons during regeneration in the adult brain following mechanical injury. Downstream of the flower fitness fingerprints, cells identified as unwanted or unfit are eliminated via apoptosis through the expression of ahuizotl (azot). However, the cells marked for elimination by the flower isoforms only undergo apoptosis if additional thresholds are met; (1) their neighboring fit/healthy cells express different levels of the fwe isoforms, and (2) the levels of the protective signal SPARC expressed by the loser or unwanted cells are unable to inhibit caspase activation. These additional thresholds for flower-mediated apoptosis, allows useful cells to recover from transient and limited stress before they are unnecessarily eliminated. Functions with dally and magu in a mechanism of scaling, which utilises apoptosis to ensure that the dpp morphogen gradient, which mediates organ growth, remains proportional to the size of the growing wing. In this mechanism, fwe represses dally- and Magu-dependent activity in expanding the gradient, and dally/Magu inhibits fwe-dependent apoptosis to keep cell death rate low. When the levels of these different proteins are optimally regulated the gradient correctly scales with organ growth but when this fails, fwe-mediated apoptosis is activated to trim the developing tissue to match the correct size of the gradient. The polypeptide is Calcium channel flower (Drosophila persimilis (Fruit fly)).